A 581-amino-acid polypeptide reads, in one-letter code: Colicin-E2 (581 aa).

Disordered regions lie at residues 1–74, 242–269, 293–320, 421–488, and 513–566; these read MSGG…SGGG, QTLS…NTRD, PDQV…EAAE, ADAA…IADK, and DLSK…MNNI. Gly residues predominate over residues 20 to 35; sequence INGGPTGLGVGGGASD. Residues 36–45 show a composition bias toward low complexity; that stretch reads GSGWSSENNP. The segment covering 46–74 has biased composition (gly residues); that stretch reads WGGGSGSGIHWGGGSGHGNGGGNGNSGGG. The span at 242–251 shows a compositional bias: polar residues; that stretch reads QTLSPGVTNN. 3 stretches are compositionally biased toward basic and acidic residues: residues 296 to 320, 429 to 452, and 464 to 475; these read VKQR…EAAE, QERR…ESKR, and PVGDKWLDDAGK. Residues 518–527 are compositionally biased toward polar residues; that stretch reads FKGSNKTNIQ. Over residues 535–554 the composition is skewed to basic and acidic residues; the sequence is RKKDQVGGRERFELHHDKPI. Residues histidine 549, histidine 574, and histidine 578 each coordinate Zn(2+).

Belongs to the colicin/pyosin nuclease family.

In terms of biological role, this plasmid-coded bactericidal protein is an endonuclease active on both single- and double-stranded DNA but with undefined specificity. Colicins are polypeptide toxins produced by and active against E.coli and closely related bacteria. This is Colicin-E2 (col) from Escherichia coli.